Reading from the N-terminus, the 325-residue chain is Glutarate 2-hydroxylase (325 aa).

The Fe cation site is built by histidine 160, aspartate 162, and histidine 292.

This sequence belongs to the glutarate hydroxylase family. In terms of assembly, homotetramer. It depends on Fe(2+) as a cofactor.

The catalysed reaction is glutarate + 2-oxoglutarate + O2 = (S)-2-hydroxyglutarate + succinate + CO2. It participates in amino-acid degradation. In terms of biological role, acts as an alpha-ketoglutarate-dependent dioxygenase catalyzing hydroxylation of glutarate (GA) to L-2-hydroxyglutarate (L2HG). Functions in a L-lysine degradation pathway that proceeds via cadaverine, glutarate and L-2-hydroxyglutarate. This Escherichia coli O6:K15:H31 (strain 536 / UPEC) protein is Glutarate 2-hydroxylase.